Here is a 101-residue protein sequence, read N- to C-terminus: Small ribosomal subunit protein uS14 (101 aa).

Belongs to the universal ribosomal protein uS14 family. Part of the 30S ribosomal subunit. Contacts proteins S3 and S10.

In terms of biological role, binds 16S rRNA, required for the assembly of 30S particles and may also be responsible for determining the conformation of the 16S rRNA at the A site. The sequence is that of Small ribosomal subunit protein uS14 from Enterobacter sp. (strain 638).